The primary structure comprises 581 residues: Chaotic nuclear migration protein 67 (581 aa).

A phosphoserine mark is found at Ser-17, Ser-20, Ser-72, Ser-85, and Ser-89. A disordered region spans residues 86-150; sequence YQESPGLQER…PTDEHTSPDI (65 aa). Over residues 94 to 114 the composition is skewed to basic and acidic residues; it reads ERPKNEKDKSPIGTDVHKKDV. A Phosphoserine modification is found at Ser-151. Coiled coils occupy residues 179-252, 306-363, and 373-451; these read LGYQ…DTIQ, FLCA…LSKQ, and KLTI…NTSE.

As to quaternary structure, interacts directly with ADY3 and YOR129C. Interacts with ADY4. Probable component of a SPB complex composed of ADY3, SSP1, DON1, MPC54, SPO21/MPC70, NUD1 and CNM67. In terms of processing, phosphorylated in its N-terminal part.

It is found in the cytoplasm. It localises to the cytoskeleton. Its subcellular location is the microtubule organizing center. The protein localises to the spindle pole body. In terms of biological role, involved in the pathway that organizes the shaping and sizing of the prospore membrane (PSM) during sporulation. Required for the proper formation of the spindle pole body (SPB) outer plaque. May connect the outer plaque to the central plaque embedded in the nuclear envelope. The polypeptide is Chaotic nuclear migration protein 67 (CNM67) (Saccharomyces cerevisiae (strain ATCC 204508 / S288c) (Baker's yeast)).